The chain runs to 2221 residues: RNA-directed RNA polymerase L (2221 aa).

The tract at residues 29–292 (KTVLLSQVNF…SERETLIEAE (264 aa)) is endonuclease. Residues E54, D91, and E104 each contribute to the Mn(2+) site. The active site involves K117. Positions 1171–1369 (LDMKSVVRLS…YLSSKLNKFI (199 aa)) constitute a RdRp catalytic domain. Residue D1327 participates in Mg(2+) binding.

Belongs to the Bunyavirales RNA polymerase family. As to quaternary structure, homomultimer; the oligomeric structure is essential for the polymerase activity. Interacts with nucleoprotein N. Interacts with protein Z; this interaction inhibits viral transcription and replication, Z partially blocks the product exit tunnel for the releasing nascent RNA product. Mn(2+) is required as a cofactor. Requires Mg(2+) as cofactor.

It localises to the virion. Its subcellular location is the host cytoplasm. It catalyses the reaction RNA(n) + a ribonucleoside 5'-triphosphate = RNA(n+1) + diphosphate. RNA-dependent RNA polymerase, which is responsible for the replication and transcription of the viral RNA genome using antigenomic RNA as an intermediate. During transcription, synthesizes subgenomic RNAs and assures their capping by a cap-snatching mechanism, which involves the endonuclease activity cleaving the host capped pre-mRNAs. These short capped RNAs are then used as primers for viral transcription. The 3'-end of subgenomic mRNAs molecules are heterogeneous and not polyadenylated. The replicase function is to direct synthesis of antigenomic and genomic RNA which are encapsidated and non capped. As a consequence of the use of the same enzyme for both transcription and replication, these mechanisms need to be well coordinated. These processes may be regulated by proteins N and Z in a dose-dependent manner. Z protein inhibits the viral polymerase L und thus the viral transcription and RNA synthesis. This Sigmodon hispidus (Hispid cotton rat) protein is RNA-directed RNA polymerase L.